The chain runs to 275 residues: Autophagy protein 5 (275 aa).

The residue at position 1 (Met1) is an N-acetylmethionine. Residue Lys130 forms a Glycyl lysine isopeptide (Lys-Gly) (interchain with G-Cter in ATG12) linkage.

This sequence belongs to the ATG5 family. In terms of assembly, forms a conjugate with ATG12. Part of the minor complex composed of 4 sets of ATG12-ATG5 and ATG16L1 (400 kDa); this complex interacts with ATG3 leading to disruption of ATG7 interaction and promotion of ATG8-like proteins lipidation. Forms an 800-kDa complex composed of ATG12-ATG5 and ATG16L2. The ATG12-ATG5 conjugate interacts with RAB33A; this interaction is bridged by ATG16L1 and promotes ATG12-ATG5-ATG16L1 complex recruitment to phagophores. Interacts with TECPR1; the interaction is direct and does not take place when ATG16L1 is associated with the ATG5-ATG12 conjugate. Interacts with DHX58/RIG-1, IFIH1/MDA5 and MAVS/IPS-1 in monomeric form as well as in ATG12-ATG5 conjugate form. The interaction with MAVS is further enhanced upon vesicular stomatitis virus (VSV) infection. Interacts with ATG3. Interacts with ATG7 and ATG10. Interacts with FADD. Interacts with Bassoon/BSN; this interaction is important for the regulation of presynaptic autophagy. Interacts with ATG16L2. Post-translationally, conjugated to ATG12; which is essential for autophagy, but is not required for association with isolation membrane. Acetylated by EP300.

Its subcellular location is the cytoplasm. The protein resides in the preautophagosomal structure membrane. Its function is as follows. Involved in autophagic vesicle formation. Conjugation with ATG12, through a ubiquitin-like conjugating system involving ATG7 as an E1-like activating enzyme and ATG10 as an E2-like conjugating enzyme, is essential for its function. The ATG12-ATG5 conjugate acts as an E3-like enzyme which is required for lipidation of ATG8 family proteins and their association to the vesicle membranes. Involved in mitochondrial quality control after oxidative damage, and in subsequent cellular longevity. Plays a critical role in multiple aspects of lymphocyte development and is essential for both B and T lymphocyte survival and proliferation. Required for optimal processing and presentation of antigens for MHC II. Involved in the maintenance of axon morphology and membrane structures, as well as in normal adipocyte differentiation. Promotes primary ciliogenesis through removal of OFD1 from centriolar satellites and degradation of IFT20 via the autophagic pathway. As part of the ATG8 conjugation system with ATG12 and ATG16L1, required for recruitment of LRRK2 to stressed lysosomes and induction of LRRK2 kinase activity in response to lysosomal stress. Functionally, may play an important role in the apoptotic process, possibly within the modified cytoskeleton. Its expression is a relatively late event in the apoptotic process, occurring downstream of caspase activity. Plays a crucial role in IFN-gamma-induced autophagic cell death by interacting with FADD. The sequence is that of Autophagy protein 5 from Bos taurus (Bovine).